We begin with the raw amino-acid sequence, 192 residues long: Protein A16 (192 aa).

The N-terminal stretch at 1-22 (MLLANTAAAVLLLIVCIGASVG) is a signal peptide. One can recognise a C-type lectin domain in the interval 71–186 (KNKKFTIGTL…CLNPLNIFPY (116 aa)). Residues Cys-163 and Cys-177 are joined by a disulfide bond.

As to expression, expressed in the gut of adults.

The polypeptide is Protein A16 (CTL3) (Anopheles gambiae (African malaria mosquito)).